Here is a 223-residue protein sequence, read N- to C-terminus: Phosphoribosylformylglycinamidine synthase subunit PurQ (223 aa).

Residues 3 to 223 enclose the Glutamine amidotransferase type-1 domain; sequence FAVLVFPGSN…MVKSWREQNV (221 aa). Residue Cys85 is the Nucleophile of the active site. Catalysis depends on residues His193 and Glu195.

Part of the FGAM synthase complex composed of 1 PurL, 1 PurQ and 2 PurS subunits.

It is found in the cytoplasm. The catalysed reaction is N(2)-formyl-N(1)-(5-phospho-beta-D-ribosyl)glycinamide + L-glutamine + ATP + H2O = 2-formamido-N(1)-(5-O-phospho-beta-D-ribosyl)acetamidine + L-glutamate + ADP + phosphate + H(+). It catalyses the reaction L-glutamine + H2O = L-glutamate + NH4(+). It participates in purine metabolism; IMP biosynthesis via de novo pathway; 5-amino-1-(5-phospho-D-ribosyl)imidazole from N(2)-formyl-N(1)-(5-phospho-D-ribosyl)glycinamide: step 1/2. In terms of biological role, part of the phosphoribosylformylglycinamidine synthase complex involved in the purines biosynthetic pathway. Catalyzes the ATP-dependent conversion of formylglycinamide ribonucleotide (FGAR) and glutamine to yield formylglycinamidine ribonucleotide (FGAM) and glutamate. The FGAM synthase complex is composed of three subunits. PurQ produces an ammonia molecule by converting glutamine to glutamate. PurL transfers the ammonia molecule to FGAR to form FGAM in an ATP-dependent manner. PurS interacts with PurQ and PurL and is thought to assist in the transfer of the ammonia molecule from PurQ to PurL. The sequence is that of Phosphoribosylformylglycinamidine synthase subunit PurQ from Staphylococcus epidermidis (strain ATCC 35984 / DSM 28319 / BCRC 17069 / CCUG 31568 / BM 3577 / RP62A).